A 1309-amino-acid polypeptide reads, in one-letter code: Clustered mitochondria protein homolog (1309 aa).

The tract at residues 1–34 (MLLNGDCPESLKKEAAAAEPPRENGLDEAGPGDE) is disordered. Over residues 9–25 (ESLKKEAAAAEPPRENG) the composition is skewed to basic and acidic residues. Phosphoserine occurs at positions 279 and 281. Positions 335–577 (RAEDAYTSRL…RTFPPDLNFL (243 aa)) constitute a Clu domain. Polar residues predominate over residues 636–651 (LETPSSLENGGPSSLE). Residues 636 to 674 (LETPSSLENGGPSSLESKSEDPPGQEAGSEEEGSSASGL) form a disordered region. Ser654, Ser664, and Ser723 each carry phosphoserine. TPR repeat units follow at residues 978–1011 (AFHF…FNNV), 1020–1053 (CACL…SERV), 1104–1137 (ALLD…STKY), and 1146–1179 (ALSH…YKTQ). Residues 1264–1278 (HQLQEASRNRDRAEE) are compositionally biased toward basic and acidic residues. Positions 1264 to 1309 (HQLQEASRNRDRAEEPMATEPAPAGAPGDLGSQPPAAKDPSPSVQG) are disordered. Over residues 1279–1290 (PMATEPAPAGAP) the composition is skewed to low complexity.

The protein belongs to the CLU family.

The protein localises to the cytoplasm. Its subcellular location is the cytoplasmic granule. Functionally, mRNA-binding protein involved in proper cytoplasmic distribution of mitochondria. Specifically binds mRNAs of nuclear-encoded mitochondrial proteins in the cytoplasm and regulates transport or translation of these transcripts close to mitochondria, playing a role in mitochondrial biogenesis. The sequence is that of Clustered mitochondria protein homolog (CLUH) from Homo sapiens (Human).